The primary structure comprises 2967 residues: BEACH domain-containing protein lvsD (2967 aa).

Disordered regions lie at residues 1–25, 322–364, 588–615, 917–936, 1077–1105, 1173–1220, 1583–1613, 1831–1859, 1921–2009, and 2029–2062; these read MSSP…RIGG, NNNN…SSNS, ILSI…QQQL, NNSN…NNIN, GGSN…KDKD, NTSS…SDHR, NNNS…NNEN, QQQQ…SSVV, PQKT…TLNN, and KSTL…NNKN. The BEACH 1 domain occupies 229–491; that stretch reads MTFRKAPSSV…QDLFRKGSNY (263 aa). A compositionally biased stretch (low complexity) spans 1079 to 1092; sequence SNNNNNNNNNNSNN. The segment covering 1093–1105 has biased composition (basic and acidic residues); the sequence is NKDKIDSNNKDKD. Composition is skewed to low complexity over residues 1185–1194, 1583–1611, 1831–1857, 1926–1980, 1993–2006, and 2034–2062; these read PLLTSTKSMS, NNNS…LNNN, QQQQ…SSSS, QNQH…SFSN, NIIT…TTST, and SSSS…NNKN. Residues 2060–2162 form the BEACH-type PH domain; the sequence is NKNIKLEFST…ICAQILKLIG (103 aa). 2 BEACH domains span residues 2202 to 2492 and 2628 to 2785; these read TPQQ…HPQR and NSRV…IYSN. WD repeat units lie at residues 2658-2710 and 2720-2761; these read NHKS…SDHH and GHNF…KSIQ. Disordered stretches follow at residues 2798 to 2820 and 2915 to 2934; these read SATT…SSNT and PSTS…NNGN. 2 stretches are compositionally biased toward low complexity: residues 2811–2820 and 2924–2934; these read SSSSLSSSNT and NSNNNNNNNGN.

The chain is BEACH domain-containing protein lvsD (lvsD) from Dictyostelium discoideum (Social amoeba).